The sequence spans 284 residues: ATP synthase subunit a (284 aa).

A run of 5 helical transmembrane segments spans residues 47–67, 108–128, 156–176, 233–253, and 254–274; these read AFHLDTLSISFILGALFLIFF, VAPLALTTFIWIVLMNTMDLV, VPTADPNATLGMSIGIFILII, MIFILIALLPFWVQWSLSLPW, and AIFHILIVLLQAFIFMTLVIV.

Belongs to the ATPase A chain family. In terms of assembly, F-type ATPases have 2 components, CF(1) - the catalytic core - and CF(0) - the membrane proton channel. CF(1) has five subunits: alpha(3), beta(3), gamma(1), delta(1), epsilon(1). CF(0) has three main subunits: a(1), b(2) and c(9-12). The alpha and beta chains form an alternating ring which encloses part of the gamma chain. CF(1) is attached to CF(0) by a central stalk formed by the gamma and epsilon chains, while a peripheral stalk is formed by the delta and b chains.

The protein resides in the cell inner membrane. Its function is as follows. Key component of the proton channel; it plays a direct role in the translocation of protons across the membrane. In Ruthia magnifica subsp. Calyptogena magnifica, this protein is ATP synthase subunit a.